The chain runs to 621 residues: Threonine--tRNA ligase (621 aa).

Residues 1 to 137 form an editing domain region; that stretch reads MRILQLHCDS…ESSKVVTKDS (137 aa). The tract at residues 128–150 is disordered; sequence ESSKVVTKDSTTKDDDEDTSDAL. A catalytic region spans residues 202 to 501; it reads PHVALMKKLA…SKKGKKPQLP (300 aa). Residues Cys294, His346, and His470 each coordinate Zn(2+). Over residues 598 to 612 the composition is skewed to polar residues; it reads QTSGKPYTGLNQSQH. A disordered region spans residues 598 to 621; sequence QTSGKPYTGLNQSQHLSKRPQLMV.

Belongs to the class-II aminoacyl-tRNA synthetase family. In terms of assembly, homodimer. Requires Zn(2+) as cofactor.

The protein resides in the cytoplasm. The catalysed reaction is tRNA(Thr) + L-threonine + ATP = L-threonyl-tRNA(Thr) + AMP + diphosphate + H(+). Catalyzes the attachment of threonine to tRNA(Thr) in a two-step reaction: L-threonine is first activated by ATP to form Thr-AMP and then transferred to the acceptor end of tRNA(Thr). Also edits incorrectly charged L-seryl-tRNA(Thr). The protein is Threonine--tRNA ligase of Nitrosopumilus maritimus (strain SCM1).